Consider the following 725-residue polypeptide: D-(-)-3-hydroxybutyrate oligomer hydrolase (725 aa).

A signal peptide spans 1 to 22; it reads MNTTRDANRLRQRASLSGLALA. The active-site Charge relay system is Ser-322.

It belongs to the D-(-)-3-hydroxybutyrate oligomer hydrolase family.

It localises to the secreted. It carries out the reaction (3R)-hydroxybutanoate dimer + H2O = 2 (R)-3-hydroxybutanoate + H(+). It functions in the pathway lipid metabolism; butanoate metabolism. In terms of biological role, participates in the degradation of poly-3-hydroxybutyrate (PHB). It works downstream of poly(3-hydroxybutyrate) depolymerase, hydrolyzing D(-)-3-hydroxybutyrate oligomers of various length (3HB-oligomers) into 3HB-monomers. This is D-(-)-3-hydroxybutyrate oligomer hydrolase from Ralstonia nicotianae (strain ATCC BAA-1114 / GMI1000) (Ralstonia solanacearum).